The chain runs to 287 residues: CTD small phosphatase-like protein 3 (287 aa).

An FCP1 homology domain is found at 60–219 (RSTPEYTLVL…LKLCSFLEAI (160 aa)).

Belongs to the CTDSPL2 family.

In terms of biological role, probable phosphatase. In Caenorhabditis elegans, this protein is CTD small phosphatase-like protein 3 (scpl-3).